We begin with the raw amino-acid sequence, 328 residues long: MNLQEKTAWITHVARRVIDGDTLSFEEATALLQLPDAVTPFLLGWADVVRKCFHGNRVDLCAIVNARAGRCSEDCRFCTQAACYHTRAPVYPLLPAEGIIRRARAVRSQGIKRFSLVTSGRDPGGDFEKILGITRQLKREVPELKLCASLGIISPTEARALKEAGLDRYHHNLETAASFFPEVCTTHRYEDRVATIRAAQKVGLEVCAGGIIGLGEKPEQRVELALALRELGVTSVPVNILHPVPGTPLATQPPLPALEILRTLAVFRLLLPATTIRYAGGREHNLRDTQVLGLAGGVDALITGDYLTTAGQGTARDRQLIRDLGLEG.

Residues 53 to 282 form the Radical SAM core domain; the sequence is FHGNRVDLCA…ATTIRYAGGR (230 aa). [4Fe-4S] cluster is bound by residues Cys-71, Cys-75, and Cys-78. Positions 115, 147, 207, and 277 each coordinate [2Fe-2S] cluster.

It belongs to the radical SAM superfamily. Biotin synthase family. In terms of assembly, homodimer. The cofactor is [4Fe-4S] cluster. [2Fe-2S] cluster is required as a cofactor.

The catalysed reaction is (4R,5S)-dethiobiotin + (sulfur carrier)-SH + 2 reduced [2Fe-2S]-[ferredoxin] + 2 S-adenosyl-L-methionine = (sulfur carrier)-H + biotin + 2 5'-deoxyadenosine + 2 L-methionine + 2 oxidized [2Fe-2S]-[ferredoxin]. It participates in cofactor biosynthesis; biotin biosynthesis; biotin from 7,8-diaminononanoate: step 2/2. Its function is as follows. Catalyzes the conversion of dethiobiotin (DTB) to biotin by the insertion of a sulfur atom into dethiobiotin via a radical-based mechanism. The sequence is that of Biotin synthase from Desulforudis audaxviator (strain MP104C).